A 294-amino-acid chain; its full sequence is Cytidine deaminase (294 aa).

2 CMP/dCMP-type deaminase domains span residues 48–168 (DEDA…FGPK) and 186–294 (LTGD…VLLG). 89 to 91 (NME) contacts substrate. Residue histidine 102 participates in Zn(2+) binding. Glutamate 104 functions as the Proton donor in the catalytic mechanism. 2 residues coordinate Zn(2+): cysteine 129 and cysteine 132.

Belongs to the cytidine and deoxycytidylate deaminase family. As to quaternary structure, homodimer. The cofactor is Zn(2+).

It catalyses the reaction cytidine + H2O + H(+) = uridine + NH4(+). The catalysed reaction is 2'-deoxycytidine + H2O + H(+) = 2'-deoxyuridine + NH4(+). In terms of biological role, this enzyme scavenges exogenous and endogenous cytidine and 2'-deoxycytidine for UMP synthesis. In Salmonella choleraesuis (strain SC-B67), this protein is Cytidine deaminase.